Consider the following 865-residue polypeptide: LINE-1 type transposase domain-containing protein 1 (865 aa).

Ser-2 is modified (N-acetylserine). Ser-2 bears the Phosphoserine mark. Residue Thr-149 is modified to Phosphothreonine. The residue at position 154 (Ser-154) is a Phosphoserine. Positions 370–508 (EMKNLETQEE…EKKASRRQKE (139 aa)) are disordered. Composition is skewed to acidic residues over residues 376 to 440 (TQEE…EQTS) and 472 to 483 (SVEDSESEEEEE). 3 positions are modified to phosphoserine: Ser-472, Ser-476, and Ser-478. Basic and acidic residues predominate over residues 498-508 (TEKKASRRQKE). A phosphoserine mark is found at Ser-518, Ser-561, and Ser-573. Basic and acidic residues predominate over residues 590–608 (EEKKHRTLHTEELTSKEAD). A disordered region spans residues 590–612 (EEKKHRTLHTEELTSKEADLTEE). Residues Ser-640, Ser-648, and Ser-665 each carry the phosphoserine modification. Residues 642–684 (VLEIENSVDDLSSRMDILEERIDSLEDQIEEFSKDTMQMTKQI) are a coiled coil.

It belongs to the transposase 22 family.

The sequence is that of LINE-1 type transposase domain-containing protein 1 (L1TD1) from Homo sapiens (Human).